A 314-amino-acid chain; its full sequence is Versiconal hemiacetal acetate esterase (314 aa).

The Involved in the stabilization of the negatively charged intermediate by the formation of the oxyanion hole signature appears at 85 to 87 (HGG). Active-site residues include Ser-154, Asp-255, and His-285.

It belongs to the 'GDXG' lipolytic enzyme family.

It catalyses the reaction (2S,3S)-versiconal hemiacetal acetate + H2O = (2S-3S)-versiconal hemiacetal + acetate + H(+). The catalysed reaction is (3S)-versiconol acetate + H2O = (S)-versiconol + acetate + H(+). Its pathway is mycotoxin biosynthesis; aflatoxin biosynthesis. Functionally, versiconal hemiacetal acetate esterase; part of the gene cluster that mediates the biosynthesis of aflatoxins, a group of polyketide-derived furanocoumarins, and part of the most toxic and carcinogenic compounds among the known mycotoxins. The four major aflatoxins produced by A.parasiticus are aflatoxin B1 (AFB1), aflatoxin B2 (AFB2), aflatoxin G1 (AFG1) and aflatoxin G2 (AFG2). Within the aflatoxin pathway, the versiconal hemiacetal acetate esterase aflJ converts versiconal hemiacetal acetate (VHA) into versiconal (VAL). The biosynthesis of aflatoxins begins with the norsolorinic acid synthase aflC that combines a hexanoyl starter unit produced by the fatty acid synthase aflA/aflB and 7 malonyl-CoA extender units to synthesize the precursor NOR. The second step is the conversion of NOR to averantin and requires the norsolorinic acid ketoreductase aflD, which catalyzes the dehydration of norsolorinic acid to form (1'S)-averantin. The norsolorinic acid reductases aflE and aflF may also play a role in the conversion of NOR to AVN. The cytochrome P450 monooxygenase aflG then catalyzes the hydroxylation of AVN to 5'hydroxyaverantin (HAVN). The next step is performed by the 5'-hydroxyaverantin dehydrogenase aflH that transforms HAVN to 5'-oxoaverantin (OAVN) which is further converted to averufin (AVF) by aflK that plays a dual role in the pathway, as a 5'-oxoaverantin cyclase that mediates conversion of 5'-oxoaverantin, as well as a versicolorin B synthase in a later step in the pathway. The averufin oxidase aflI catalyzes the conversion of AVF to versiconal hemiacetal acetate (VHA). VHA is then the substrate for the versiconal hemiacetal acetate esterase aflJ to yield versiconal (VAL). Versicolorin B synthase aflK then converts VAL to versicolorin B (VERB) by closing the bisfuran ring of aflatoxin which is required for DNA-binding, thus giving to aflatoxin its activity as a mutagen. Then, the activity of the versicolorin B desaturase aflL leads to versicolorin A (VERA). A branch point starts from VERB since it can also be converted to dihydrodemethylsterigmatocystin (DMDHST), probably also by aflL, VERA being a precursor for aflatoxins B1 and G1, and DMDHST for aflatoxins B2 and G2. Next, the versicolorin reductase aflM and the cytochrome P450 monooxygenase aflN are involved in conversion of VERA to demethylsterigmatocystin (DMST). AflX and aflY seem also involved in this step, through probable aflX-mediated epoxide ring-opening step following versicolorin A oxidation and aflY-mediated Baeyer-Villiger oxidation required for the formation of the xanthone ring. The methyltransferase aflO then leads to the modification of DMST to sterigmatocystin (ST), and of DMDHST to dihydrosterigmatocystin (DHST). Both ST and DHST are then substrates of the O-methyltransferase aflP to yield O-methylsterigmatocystin (OMST) and dihydro-O-methylsterigmatocystin (DHOMST), respectively. Finally OMST is converted to aflatoxins B1 and G1, and DHOMST to aflatoxins B2 and G2, via the action of several enzymes including O-methylsterigmatocystin oxidoreductase aflQ, the cytochrome P450 monooxygenase aflU, but also the NADH-dependent flavin oxidoreductase nadA which is specifically required for the synthesis of AFG1. This chain is Versiconal hemiacetal acetate esterase, found in Aspergillus parasiticus (strain ATCC 56775 / NRRL 5862 / SRRC 143 / SU-1).